Reading from the N-terminus, the 346-residue chain is Holliday junction branch migration complex subunit RuvB (346 aa).

Residues 1–182 form a large ATPase domain (RuvB-L) region; sequence MSEPARLISP…FGIPVRLSFY (182 aa). Residues L21, R22, G63, K66, T67, T68, 129–131, R172, Y182, and R219 each bind ATP; that span reads EDF. A Mg(2+)-binding site is contributed by T67. A small ATPAse domain (RuvB-S) region spans residues 183–253; that stretch reads TVEELELIVR…IADEALTRLL (71 aa). The interval 256-346 is head domain (RuvB-H); that stretch reads NVGFDQLDKR…AQFRLFQEDD (91 aa). The DNA site is built by R292, R311, and R316.

The protein belongs to the RuvB family. In terms of assembly, homohexamer. Forms an RuvA(8)-RuvB(12)-Holliday junction (HJ) complex. HJ DNA is sandwiched between 2 RuvA tetramers; dsDNA enters through RuvA and exits via RuvB. An RuvB hexamer assembles on each DNA strand where it exits the tetramer. Each RuvB hexamer is contacted by two RuvA subunits (via domain III) on 2 adjacent RuvB subunits; this complex drives branch migration. In the full resolvosome a probable DNA-RuvA(4)-RuvB(12)-RuvC(2) complex forms which resolves the HJ.

It is found in the cytoplasm. The enzyme catalyses ATP + H2O = ADP + phosphate + H(+). In terms of biological role, the RuvA-RuvB-RuvC complex processes Holliday junction (HJ) DNA during genetic recombination and DNA repair, while the RuvA-RuvB complex plays an important role in the rescue of blocked DNA replication forks via replication fork reversal (RFR). RuvA specifically binds to HJ cruciform DNA, conferring on it an open structure. The RuvB hexamer acts as an ATP-dependent pump, pulling dsDNA into and through the RuvAB complex. RuvB forms 2 homohexamers on either side of HJ DNA bound by 1 or 2 RuvA tetramers; 4 subunits per hexamer contact DNA at a time. Coordinated motions by a converter formed by DNA-disengaged RuvB subunits stimulates ATP hydrolysis and nucleotide exchange. Immobilization of the converter enables RuvB to convert the ATP-contained energy into a lever motion, pulling 2 nucleotides of DNA out of the RuvA tetramer per ATP hydrolyzed, thus driving DNA branch migration. The RuvB motors rotate together with the DNA substrate, which together with the progressing nucleotide cycle form the mechanistic basis for DNA recombination by continuous HJ branch migration. Branch migration allows RuvC to scan DNA until it finds its consensus sequence, where it cleaves and resolves cruciform DNA. This chain is Holliday junction branch migration complex subunit RuvB, found in Rhizobium etli (strain CIAT 652).